We begin with the raw amino-acid sequence, 306 residues long: Pantothenate kinase (306 aa).

91–98 (GSVAVGKS) is an ATP binding site.

It belongs to the prokaryotic pantothenate kinase family.

It is found in the cytoplasm. The enzyme catalyses (R)-pantothenate + ATP = (R)-4'-phosphopantothenate + ADP + H(+). Its pathway is cofactor biosynthesis; coenzyme A biosynthesis; CoA from (R)-pantothenate: step 1/5. The sequence is that of Pantothenate kinase from Streptococcus suis (strain 98HAH33).